A 503-amino-acid polypeptide reads, in one-letter code: UDP-N-acetylglucosamine--peptide N-acetylglucosaminyltransferase GtfA subunit (503 aa).

The interval 1–78 (MTIYNINLGI…FTDIKIAPTS (78 aa)) is N-terminus R-fold-1. 16–19 (GVEY) contributes to the UDP binding site. The segment at 79–195 (VTVDDVLAYF…VYHFKDKIFY (117 aa)) is extended beta-sheet domain. Residues 196–306 (GKQAFVRAFM…QPKIVTIPVG (111 aa)) form a C-terminus R-fold-1 region. N-acetyl-D-glucosamine is bound at residue histidine 242. Residues 307–503 (SIDSLTDSSQ…KKTVEEVLHD (197 aa)) form an R-fold-2 region. A UDP-binding site is contributed by arginine 328. N-acetyl-D-glucosamine is bound at residue glutamate 332. UDP is bound by residues lysine 333, glycine 358, and 384–385 (HA). 404–407 (EGFG) is a binding site for N-acetyl-D-glucosamine. Residue 408–412 (LTLME) participates in UDP binding.

Belongs to the glycosyltransferase group 1 family. Glycosyltransferase 4 subfamily. Monomer. Interacts with stabilizing protein GtfB, probably as a heterotetramer with 2 subunits each of GtfA and GtfB, part of the accessory SecA2/SecY2 protein translocation apparatus.

Its subcellular location is the cytoplasm. It is found in the cell membrane. It carries out the reaction L-seryl-[protein] + UDP-N-acetyl-alpha-D-glucosamine = 3-O-[N-acetyl-alpha-D-glucosaminyl]-L-seryl-[protein] + UDP + H(+). The protein operates within protein modification; protein glycosylation. In terms of biological role, required for the polymorphic O-glycosylation of serine-rich repeat protein PsrP. Catalyzes the first step in glycosylation by transferring N-acetylglucosamine from UDP-GlcNAc to serine residues in PsrP. Part of the accessory SecA2/SecY2 system specifically required to export serine-rich repeat cell wall proteins encoded upstream in the same operon. The GtfA-GtfB complex adds GlcNAc from UDP-GlcNAc to PsrP (experimentally characterized with truncated PsrP-SSR1 constructs); this subunit alone has weak N-acetylglucosaminyl transferase activity that is 10-fold stimulated by GtfB. The complex requires at least a 25 residue-long peptide for activity; the in vitro assay has only been seen to glycosylate Ser residues. The alpha linkage was shown in L.reuteri. The protein is UDP-N-acetylglucosamine--peptide N-acetylglucosaminyltransferase GtfA subunit of Streptococcus pneumoniae serotype 4 (strain ATCC BAA-334 / TIGR4).